The following is a 400-amino-acid chain: Cysteine desulfurase (400 aa).

Residues 72–73, asparagine 152, glutamine 180, and 200–202 each bind pyridoxal 5'-phosphate; these read GT and SGH. Lysine 203 is subject to N6-(pyridoxal phosphate)lysine. Pyridoxal 5'-phosphate is bound at residue threonine 238. Cysteine 326 acts as the Cysteine persulfide intermediate in catalysis. Cysteine 326 is a binding site for [2Fe-2S] cluster.

Belongs to the class-V pyridoxal-phosphate-dependent aminotransferase family. NifS/IscS subfamily. In terms of assembly, homodimer. Pyridoxal 5'-phosphate is required as a cofactor.

It carries out the reaction (sulfur carrier)-H + L-cysteine = (sulfur carrier)-SH + L-alanine. Its function is as follows. Catalyzes the removal of elemental sulfur atoms from cysteine to produce alanine. Seems to participate in the biosynthesis of the nitrogenase metalloclusters by providing the inorganic sulfur required for the Fe-S core formation. This is Cysteine desulfurase from Gluconacetobacter diazotrophicus (strain ATCC 49037 / DSM 5601 / CCUG 37298 / CIP 103539 / LMG 7603 / PAl5).